The sequence spans 361 residues: Beta-hexosaminidase (361 aa).

Residues aspartate 69, arginine 77, arginine 144, and 174-175 (KH) contribute to the substrate site. Histidine 187 (proton donor/acceptor) is an active-site residue. The active-site Nucleophile is the aspartate 258.

This sequence belongs to the glycosyl hydrolase 3 family. NagZ subfamily.

Its subcellular location is the cytoplasm. It carries out the reaction Hydrolysis of terminal non-reducing N-acetyl-D-hexosamine residues in N-acetyl-beta-D-hexosaminides.. It participates in cell wall biogenesis; peptidoglycan recycling. Plays a role in peptidoglycan recycling by cleaving the terminal beta-1,4-linked N-acetylglucosamine (GlcNAc) from peptide-linked peptidoglycan fragments, giving rise to free GlcNAc, anhydro-N-acetylmuramic acid and anhydro-N-acetylmuramic acid-linked peptides. This chain is Beta-hexosaminidase, found in Neisseria gonorrhoeae (strain ATCC 700825 / FA 1090).